Reading from the N-terminus, the 295-residue chain is 4-diphosphocytidyl-2-C-methyl-D-erythritol kinase (295 aa).

Lys22 is a catalytic residue. ATP is bound at residue 106–116 (PAGGGFGGGSS). The active site involves Asp148.

Belongs to the GHMP kinase family. IspE subfamily.

The catalysed reaction is 4-CDP-2-C-methyl-D-erythritol + ATP = 4-CDP-2-C-methyl-D-erythritol 2-phosphate + ADP + H(+). It functions in the pathway isoprenoid biosynthesis; isopentenyl diphosphate biosynthesis via DXP pathway; isopentenyl diphosphate from 1-deoxy-D-xylulose 5-phosphate: step 3/6. Catalyzes the phosphorylation of the position 2 hydroxy group of 4-diphosphocytidyl-2C-methyl-D-erythritol. The sequence is that of 4-diphosphocytidyl-2-C-methyl-D-erythritol kinase from Xanthomonas oryzae pv. oryzae (strain MAFF 311018).